Here is a 552-residue protein sequence, read N- to C-terminus: MWVPGFGSARLPQRRRSGLESSSVRPLWLLLLFLLAAVRPVRAWESGDLELFDLVEEVQLNFYEFLGVQQDASSADIRKAYRKLSLTLHPDKNKDENAETQFRQLVAIYEVLKDDERRQRYDDVLINGLPDWRQPVFYYRRVRKMSNAELALLLFIILTVGHYAVVWSIYLEKQLDELLGRKKRERKKKTGSKSVDAAKLGASEKNERLLIKPQWHDLLPCKLGIWFCLTLKALPHLIQDAGQFYAKYKETKLKEKEDALARIEIETLQKQKKVKVKKPKPEFPVYMPLENTYIQSYDHGTSIEEIEEQMDDWLENRKRTQKRQAPEWTEEDLSQLTRSMVKFPGGTPGRWDKIAHELGRSVTDVTTKAKELKDSVTSSPGMTRLSELKSNGQNSRPIKIATALPDDIITQREDSAGAMEDEEHEAAEGEQESATTEARPRRRKSARAAEAVTRVEPEEKLRGKRQKDFDISEQNDSSDEEKQRKERTRAAEEAWTQSQQKLLELALQQYPKGASDRWDKIAKCVPSKSKEDCIARYKLLVELVQKKKQAKS.

The first 43 residues, 1–43, serve as a signal peptide directing secretion; that stretch reads MWVPGFGSARLPQRRRSGLESSSVRPLWLLLLFLLAAVRPVRA. Residues 44 to 149 lie on the Lumenal side of the membrane; that stretch reads WESGDLELFD…RRVRKMSNAE (106 aa). The 74-residue stretch at 56-129 folds into the J domain; it reads EEVQLNFYEF…RYDDVLINGL (74 aa). The chain crosses the membrane as a helical span at residues 150–170; it reads LALLLFIILTVGHYAVVWSIY. Over 171-552 the chain is Cytoplasmic; the sequence is LEKQLDELLG…LVQKKKQAKS (382 aa). An SANT 1 domain is found at 323–377; it reads RQAPEWTEEDLSQLTRSMVKFPGGTPGRWDKIAHELGRSVTDVTTKAKELKDSVT. The tract at residues 370–495 is disordered; it reads KELKDSVTSS…ERTRAAEEAW (126 aa). S379 is subject to Phosphoserine. A compositionally biased stretch (acidic residues) spans 419 to 431; it reads MEDEEHEAAEGEQ. The segment covering 453–470 has biased composition (basic and acidic residues); that stretch reads TRVEPEEKLRGKRQKDFD. Phosphoserine is present on residues S477 and S478. The span at 480–492 shows a compositional bias: basic and acidic residues; the sequence is EEKQRKERTRAAE. One can recognise an SANT 2 domain in the interval 490 to 545; that stretch reads AAEEAWTQSQQKLLELALQQYPKGASDRWDKIAKCVPSKSKEDCIARYKLLVELVQ.

Interacts (via J domain) with HSPA5. Interacts (via cytosolic domain) with ribosomes. Interacts (via SANT 2 domain) with SERPINA3; the interaction delays the formation of the covalent inhibitory complex SERPINA3-chymotrypsin, but does not alter the catalytic activity of SERPINA3. Interacts (via SANT 2 domain) with ITIH4 (via C-terminus); the interaction protects ITIH4 against in vitro cleavage by kallikrein. As to expression, widely expressed.

The protein localises to the endoplasmic reticulum membrane. It localises to the nucleus membrane. It is found in the microsome membrane. May modulate protein synthesis. The sequence is that of DnaJ homolog subfamily C member 1 (Dnajc1) from Mus musculus (Mouse).